The following is a 274-amino-acid chain: 2,3,4,5-tetrahydropyridine-2,6-dicarboxylate N-succinyltransferase (274 aa).

Arg-104 and Asp-141 together coordinate substrate.

Belongs to the transferase hexapeptide repeat family. In terms of assembly, homotrimer.

It localises to the cytoplasm. The catalysed reaction is (S)-2,3,4,5-tetrahydrodipicolinate + succinyl-CoA + H2O = (S)-2-succinylamino-6-oxoheptanedioate + CoA. The protein operates within amino-acid biosynthesis; L-lysine biosynthesis via DAP pathway; LL-2,6-diaminopimelate from (S)-tetrahydrodipicolinate (succinylase route): step 1/3. This is 2,3,4,5-tetrahydropyridine-2,6-dicarboxylate N-succinyltransferase from Shigella boydii serotype 4 (strain Sb227).